Here is a 393-residue protein sequence, read N- to C-terminus: Phosphoglycerate kinase (393 aa).

Substrate-binding positions include 21–23 (DMN), R36, 59–62 (HLGR), R114, and R147. ATP is bound by residues K198, E320, and 346 to 349 (GGDT).

It belongs to the phosphoglycerate kinase family. As to quaternary structure, monomer.

The protein resides in the cytoplasm. It catalyses the reaction (2R)-3-phosphoglycerate + ATP = (2R)-3-phospho-glyceroyl phosphate + ADP. The protein operates within carbohydrate degradation; glycolysis; pyruvate from D-glyceraldehyde 3-phosphate: step 2/5. The polypeptide is Phosphoglycerate kinase (Thiobacillus denitrificans (strain ATCC 25259 / T1)).